The chain runs to 217 residues: Small ribosomal subunit protein uS3 (217 aa).

One can recognise a KH type-2 domain in the interval 40–110 (IRDLINKGFN…EVYINIHEVR (71 aa)).

The protein belongs to the universal ribosomal protein uS3 family. Part of the 30S ribosomal subunit. Forms a tight complex with proteins S10 and S14.

Functionally, binds the lower part of the 30S subunit head. Binds mRNA in the 70S ribosome, positioning it for translation. This Rickettsia akari (strain Hartford) protein is Small ribosomal subunit protein uS3.